The chain runs to 313 residues: tRNA dimethylallyltransferase (313 aa).

13–20 (GPTASGKT) contacts ATP. Residue 15 to 20 (TASGKT) coordinates substrate. Interaction with substrate tRNA stretches follow at residues 38-41 (DSAL), 162-166 (QRLSR), 243-248 (RCVGYR), and 276-283 (KRQITWLR).

This sequence belongs to the IPP transferase family. In terms of assembly, monomer. The cofactor is Mg(2+).

The enzyme catalyses adenosine(37) in tRNA + dimethylallyl diphosphate = N(6)-dimethylallyladenosine(37) in tRNA + diphosphate. Functionally, catalyzes the transfer of a dimethylallyl group onto the adenine at position 37 in tRNAs that read codons beginning with uridine, leading to the formation of N6-(dimethylallyl)adenosine (i(6)A). In Aliivibrio salmonicida (strain LFI1238) (Vibrio salmonicida (strain LFI1238)), this protein is tRNA dimethylallyltransferase.